We begin with the raw amino-acid sequence, 73 residues long: Conotoxin Cl9.2 (73 aa).

An N-terminal signal peptide occupies residues 1–18 (MSKLVILAVLVLLPLVTA). Residues 19–41 (EHGRDEQAMQPEKKTMWTLWSLT) constitute a propeptide that is removed on maturation. 3 cysteine pairs are disulfide-bonded: Cys46/Cys61, Cys52/Cys63, and Cys58/Cys72.

As to expression, expressed by the venom duct.

Its subcellular location is the secreted. This is Conotoxin Cl9.2 from Californiconus californicus (California cone).